We begin with the raw amino-acid sequence, 115 residues long: Double-headed protease inhibitor, submandibular gland (115 aa).

Kazal-like domains lie at 6–66 and 67–115; these read IGRE…ACDI and ECTE…HGEC. 6 disulfide bridges follow: Cys12–Cys46, Cys24–Cys43, Cys32–Cys64, Cys68–Cys97, Cys75–Cys94, and Cys83–Cys115.

The protein localises to the secreted. Its function is as follows. This inhibitor is composed of two homologous actively inhibiting halves: one which inhibits trypsin, the other which inhibits elastase. The chain is Double-headed protease inhibitor, submandibular gland from Vulpes vulpes (Red fox).